Reading from the N-terminus, the 268-residue chain is Tryptophan synthase alpha chain (268 aa).

Catalysis depends on proton acceptor residues Glu-40 and Asp-51.

This sequence belongs to the TrpA family. In terms of assembly, tetramer of two alpha and two beta chains.

It carries out the reaction (1S,2R)-1-C-(indol-3-yl)glycerol 3-phosphate + L-serine = D-glyceraldehyde 3-phosphate + L-tryptophan + H2O. The protein operates within amino-acid biosynthesis; L-tryptophan biosynthesis; L-tryptophan from chorismate: step 5/5. Functionally, the alpha subunit is responsible for the aldol cleavage of indoleglycerol phosphate to indole and glyceraldehyde 3-phosphate. This chain is Tryptophan synthase alpha chain, found in Geobacillus thermodenitrificans (strain NG80-2).